Reading from the N-terminus, the 185-residue chain is Peptidyl-tRNA hydrolase (185 aa).

Residue Tyr-14 participates in tRNA binding. The Proton acceptor role is filled by His-19. The tRNA site is built by Tyr-65, Asn-67, and Asn-113.

Belongs to the PTH family. As to quaternary structure, monomer.

It is found in the cytoplasm. The enzyme catalyses an N-acyl-L-alpha-aminoacyl-tRNA + H2O = an N-acyl-L-amino acid + a tRNA + H(+). In terms of biological role, hydrolyzes ribosome-free peptidyl-tRNAs (with 1 or more amino acids incorporated), which drop off the ribosome during protein synthesis, or as a result of ribosome stalling. Functionally, catalyzes the release of premature peptidyl moieties from peptidyl-tRNA molecules trapped in stalled 50S ribosomal subunits, and thus maintains levels of free tRNAs and 50S ribosomes. The chain is Peptidyl-tRNA hydrolase from Rickettsia felis (strain ATCC VR-1525 / URRWXCal2) (Rickettsia azadi).